The chain runs to 89 residues: HssA/B-like protein 22 (89 aa).

Belongs to the hssA/B family.

This chain is HssA/B-like protein 22 (hssl22), found in Dictyostelium discoideum (Social amoeba).